Consider the following 188-residue polypeptide: Trafficking protein particle complex subunit 5 (188 aa).

S10 carries the phosphoserine modification.

The protein belongs to the TRAPP small subunits family. BET3 subfamily. As to quaternary structure, component of the multisubunit TRAPP (transport protein particle) complex, which includes at least TRAPPC2, TRAPPC2L, TRAPPC3, TRAPPC3L, TRAPPC4, TRAPPC5, TRAPPC8, TRAPPC9, TRAPPC10, TRAPPC11 and TRAPPC12.

The protein resides in the golgi apparatus. The protein localises to the cis-Golgi network. Its subcellular location is the endoplasmic reticulum. In terms of biological role, may play a role in vesicular transport from endoplasmic reticulum to Golgi. This is Trafficking protein particle complex subunit 5 (TRAPPC5) from Homo sapiens (Human).